A 299-amino-acid polypeptide reads, in one-letter code: ATP phosphoribosyltransferase (299 aa).

This sequence belongs to the ATP phosphoribosyltransferase family. Long subfamily. As to quaternary structure, equilibrium between an active dimeric form, an inactive hexameric form and higher aggregates. Interconversion between the various forms is largely reversible and is influenced by the natural substrates and inhibitors of the enzyme. Mg(2+) is required as a cofactor.

It is found in the cytoplasm. The catalysed reaction is 1-(5-phospho-beta-D-ribosyl)-ATP + diphosphate = 5-phospho-alpha-D-ribose 1-diphosphate + ATP. Its pathway is amino-acid biosynthesis; L-histidine biosynthesis; L-histidine from 5-phospho-alpha-D-ribose 1-diphosphate: step 1/9. Feedback inhibited by histidine. Functionally, catalyzes the condensation of ATP and 5-phosphoribose 1-diphosphate to form N'-(5'-phosphoribosyl)-ATP (PR-ATP). Has a crucial role in the pathway because the rate of histidine biosynthesis seems to be controlled primarily by regulation of HisG enzymatic activity. This is ATP phosphoribosyltransferase from Serratia proteamaculans (strain 568).